A 261-amino-acid polypeptide reads, in one-letter code: ATP synthase subunit a (261 aa).

Transmembrane regions (helical) follow at residues 30 to 50, 63 to 83, 96 to 116, 125 to 145, 151 to 171, 187 to 207, 214 to 234, and 235 to 255; these read VLFT…GLFM, WQVA…ANIG, LFMF…VLGL, IAIT…VGFW, FFSL…IAPI, LFVA…FVIN, LWLG…ISAL, and ELLV…LYIN.

It belongs to the ATPase A chain family. F-type ATPases have 2 components, CF(1) - the catalytic core - and CF(0) - the membrane proton channel. CF(1) has five subunits: alpha(3), beta(3), gamma(1), delta(1), epsilon(1). CF(0) has three main subunits: a(1), b(2) and c(9-12). The alpha and beta chains form an alternating ring which encloses part of the gamma chain. CF(1) is attached to CF(0) by a central stalk formed by the gamma and epsilon chains, while a peripheral stalk is formed by the delta and b chains.

It localises to the cell inner membrane. Key component of the proton channel; it plays a direct role in the translocation of protons across the membrane. In Sphingopyxis alaskensis (strain DSM 13593 / LMG 18877 / RB2256) (Sphingomonas alaskensis), this protein is ATP synthase subunit a.